A 517-amino-acid chain; its full sequence is Bifunctional purine biosynthesis protein PurH (517 aa).

In terms of domain architecture, MGS-like spans 1 to 145 (MSPLALVSVS…KNHKDVSVLV (145 aa)).

Belongs to the PurH family.

It carries out the reaction (6R)-10-formyltetrahydrofolate + 5-amino-1-(5-phospho-beta-D-ribosyl)imidazole-4-carboxamide = 5-formamido-1-(5-phospho-D-ribosyl)imidazole-4-carboxamide + (6S)-5,6,7,8-tetrahydrofolate. The catalysed reaction is IMP + H2O = 5-formamido-1-(5-phospho-D-ribosyl)imidazole-4-carboxamide. It participates in purine metabolism; IMP biosynthesis via de novo pathway; 5-formamido-1-(5-phospho-D-ribosyl)imidazole-4-carboxamide from 5-amino-1-(5-phospho-D-ribosyl)imidazole-4-carboxamide (10-formyl THF route): step 1/1. Its pathway is purine metabolism; IMP biosynthesis via de novo pathway; IMP from 5-formamido-1-(5-phospho-D-ribosyl)imidazole-4-carboxamide: step 1/1. This Prochlorococcus marinus (strain MIT 9301) protein is Bifunctional purine biosynthesis protein PurH.